The primary structure comprises 143 residues: Hemoglobin subunit alpha (143 aa).

The residue at position 2 (serine 2) is an N-acetylserine. A Globin domain is found at 2–143 (SLSDKDKSAV…VALALAEKYR (142 aa)). O2 is bound at residue histidine 60. Residue histidine 89 coordinates heme b.

It belongs to the globin family. Heterotetramer of two alpha chains and two beta chains. As to expression, red blood cells.

Its function is as follows. Involved in oxygen transport from gills to the various peripheral tissues. The sequence is that of Hemoglobin subunit alpha (hba) from Pogonophryne scotti (Saddleback plunderfish).